The following is a 226-amino-acid chain: 3-dehydroquinate dehydratase (226 aa).

Residues Ser-9, 32–34 (EVR), and Arg-59 each bind 3-dehydroquinate. Residue His-119 is the Proton donor/acceptor of the active site. Residue Lys-146 is the Schiff-base intermediate with substrate of the active site. 3 residues coordinate 3-dehydroquinate: Arg-187, Thr-208, and Gln-212.

Belongs to the type-I 3-dehydroquinase family. Homodimer.

The catalysed reaction is 3-dehydroquinate = 3-dehydroshikimate + H2O. The protein operates within metabolic intermediate biosynthesis; chorismate biosynthesis; chorismate from D-erythrose 4-phosphate and phosphoenolpyruvate: step 3/7. In terms of biological role, involved in the third step of the chorismate pathway, which leads to the biosynthesis of aromatic amino acids. Catalyzes the cis-dehydration of 3-dehydroquinate (DHQ) and introduces the first double bond of the aromatic ring to yield 3-dehydroshikimate. This Desulfotalea psychrophila (strain LSv54 / DSM 12343) protein is 3-dehydroquinate dehydratase.